Here is a 432-residue protein sequence, read N- to C-terminus: Adenosine 3'-phospho 5'-phosphosulfate transporter 1 (432 aa).

Transmembrane regions (helical) follow at residues 5–25 (WWAV…ETPE), 40–60 (VVNA…VQYF), 109–129 (ALKL…WGVL), 154–174 (FLVL…CVLC), 238–258 (WEYL…LSSG), 265–285 (PATT…DSFT), 299–319 (SVQM…GSLL), 353–373 (LFIF…IMTL), and 387–407 (GHTV…ALLL). A Phosphoserine modification is found at Ser-427.

It belongs to the nucleotide-sugar transporter family. SLC35B subfamily.

The protein resides in the golgi apparatus membrane. The enzyme catalyses 3'-phosphoadenylyl sulfate(in) + adenosine 3',5'-bisphosphate(out) = 3'-phosphoadenylyl sulfate(out) + adenosine 3',5'-bisphosphate(in). Its function is as follows. Probably functions as a 3'-phosphoadenylyl sulfate:adenosine 3',5'-bisphosphate antiporter at the Golgi membranes. Mediates the transport from the cytosol into the lumen of the Golgi of 3'-phosphoadenylyl sulfate/adenosine 3'-phospho 5'-phosphosulfate (PAPS), a universal sulfuryl donor for sulfation events that take place in that compartment. In Pongo abelii (Sumatran orangutan), this protein is Adenosine 3'-phospho 5'-phosphosulfate transporter 1.